A 164-amino-acid chain; its full sequence is 4-hydroxy-4-methyl-2-oxoglutarate aldolase (164 aa).

Substrate-binding positions include 74 to 77 (GGNL) and arginine 96. Aspartate 97 is a binding site for a divalent metal cation.

This sequence belongs to the class II aldolase/RraA-like family. In terms of assembly, homotrimer. Ni(2+) serves as cofactor. Requires Co(2+) as cofactor. Zn(2+) is required as a cofactor.

The enzyme catalyses 4-hydroxy-4-methyl-2-oxoglutarate = 2 pyruvate. It catalyses the reaction oxaloacetate + H(+) = pyruvate + CO2. Its activity is regulated as follows. Competitively inhibited by oxalate, a pyruvate enolate analog. Its function is as follows. Catalyzes the aldol cleavage of 4-hydroxy-4-methyl-2-oxoglutarate (HMG) into 2 molecules of pyruvate. Also contains a secondary oxaloacetate (OAA) decarboxylase activity due to the common pyruvate enolate transition state formed following C-C bond cleavage in the retro-aldol and decarboxylation reactions. The polypeptide is 4-hydroxy-4-methyl-2-oxoglutarate aldolase (Thermus thermophilus (strain ATCC 27634 / DSM 579 / HB8)).